The sequence spans 165 residues: Lipoprotein signal peptidase (165 aa).

3 consecutive transmembrane segments (helical) span residues 9 to 29 (FLAI…VLLY), 69 to 89 (KYFL…FLFL), and 98 to 118 (IRFS…DIVF). Catalysis depends on residues aspartate 124 and aspartate 142. The helical transmembrane segment at 133 to 153 (WFFPTFNFADIFISLGTLIFI) threads the bilayer.

Belongs to the peptidase A8 family.

It is found in the cell inner membrane. It carries out the reaction Release of signal peptides from bacterial membrane prolipoproteins. Hydrolyzes -Xaa-Yaa-Zaa-|-(S,diacylglyceryl)Cys-, in which Xaa is hydrophobic (preferably Leu), and Yaa (Ala or Ser) and Zaa (Gly or Ala) have small, neutral side chains.. Its pathway is protein modification; lipoprotein biosynthesis (signal peptide cleavage). This protein specifically catalyzes the removal of signal peptides from prolipoproteins. This is Lipoprotein signal peptidase from Chlamydia abortus (strain DSM 27085 / S26/3) (Chlamydophila abortus).